Consider the following 407-residue polypeptide: 1-deoxy-D-xylulose 5-phosphate reductoisomerase (407 aa).

Residues T25, G26, S27, I28, N53, and N136 each coordinate NADPH. K137 contacts 1-deoxy-D-xylulose 5-phosphate. E138 is a binding site for NADPH. D162 serves as a coordination point for Mn(2+). Positions 163, 164, 188, and 211 each coordinate 1-deoxy-D-xylulose 5-phosphate. E164 serves as a coordination point for Mn(2+). G217 lines the NADPH pocket. Residues S224, N229, K230, and E233 each coordinate 1-deoxy-D-xylulose 5-phosphate. E233 is a Mn(2+) binding site.

The protein belongs to the DXR family. Requires Mg(2+) as cofactor. The cofactor is Mn(2+).

The catalysed reaction is 2-C-methyl-D-erythritol 4-phosphate + NADP(+) = 1-deoxy-D-xylulose 5-phosphate + NADPH + H(+). It functions in the pathway isoprenoid biosynthesis; isopentenyl diphosphate biosynthesis via DXP pathway; isopentenyl diphosphate from 1-deoxy-D-xylulose 5-phosphate: step 1/6. In terms of biological role, catalyzes the NADPH-dependent rearrangement and reduction of 1-deoxy-D-xylulose-5-phosphate (DXP) to 2-C-methyl-D-erythritol 4-phosphate (MEP). This chain is 1-deoxy-D-xylulose 5-phosphate reductoisomerase, found in Bradyrhizobium sp. (strain BTAi1 / ATCC BAA-1182).